A 1823-amino-acid polypeptide reads, in one-letter code: Bromodomain-containing protein DDB_G0280777 (1823 aa).

Disordered stretches follow at residues 44-83 and 200-281; these read DNNN…EEDE and LKQT…RTTS. A compositionally biased stretch (basic and acidic residues) spans 65–77; it reads SNKEEEKEEKEEK. Residues 210–224 show a composition bias toward basic residues; it reads KRRNQQHQNLLKKQK. Over residues 225–250 the composition is skewed to basic and acidic residues; the sequence is IQKEKEEREQKEKEQKEKEQKEKEEQ. The segment covering 251–262 has biased composition (low complexity); that stretch reads QQQLFLLQQQQQ. The Bromo domain occupies 306 to 413; it reads EAQEEMYDQL…KKSKDLMKNV (108 aa). 8 disordered regions span residues 429–654, 753–781, 855–886, 949–993, 1055–1079, 1190–1386, 1453–1477, and 1679–1823; these read ENKN…EEQT, NCNN…NNSL, INDN…NNKP, NSSK…DEDF, LPNN…PPPS, IDPK…IQAS, QLQQ…QTPQ, and QQQQ…QKKQ. 4 stretches are compositionally biased toward low complexity: residues 432–486, 494–511, 520–555, and 570–579; these read NNNN…NTPL, CSPS…TPQS, QQQQ…ISPR, and SSSSLSSSSL. Over residues 580 to 590 the composition is skewed to polar residues; sequence ALNSQNENGVN. Positions 601 to 614 are enriched in basic and acidic residues; that stretch reads MESEESTNVKKEEN. Residues 631–643 show a composition bias toward acidic residues; that stretch reads EGEEQQEQEDEEQ. 5 stretches are compositionally biased toward low complexity: residues 753-779, 863-884, 949-958, 1055-1071, and 1205-1378; these read NCNN…NNNN, NNNN…NNNN, NSSKSNNNSN, and LPNN…TTQL. Residues 1679–1705 show a composition bias toward low complexity; the sequence is QQQQPQQQQQQPQQQPQQQPQQQQQPQ. Composition is skewed to basic and acidic residues over residues 1716–1737 and 1744–1755; these read PKEK…EKDR and KTESKKESKKSL. Low complexity-rich tracts occupy residues 1756-1767 and 1789-1806; these read NDSSNSDINTSV and SSKQ…TQDS. Basic residues predominate over residues 1813-1823; that stretch reads KKKRGRPQKKQ.

In Dictyostelium discoideum (Social amoeba), this protein is Bromodomain-containing protein DDB_G0280777.